The chain runs to 519 residues: Exodeoxyribonuclease 7 large subunit (519 aa).

A disordered region spans residues 500–519 (VGRGKTRKPKEEPPAQGSLL).

This sequence belongs to the XseA family. Heterooligomer composed of large and small subunits.

The protein resides in the cytoplasm. It catalyses the reaction Exonucleolytic cleavage in either 5'- to 3'- or 3'- to 5'-direction to yield nucleoside 5'-phosphates.. In terms of biological role, bidirectionally degrades single-stranded DNA into large acid-insoluble oligonucleotides, which are then degraded further into small acid-soluble oligonucleotides. This is Exodeoxyribonuclease 7 large subunit from Cereibacter sphaeroides (strain KD131 / KCTC 12085) (Rhodobacter sphaeroides).